A 348-amino-acid polypeptide reads, in one-letter code: Phenylalanine--tRNA ligase alpha subunit (348 aa).

Mg(2+) is bound at residue Glu262.

It belongs to the class-II aminoacyl-tRNA synthetase family. Phe-tRNA synthetase alpha subunit type 1 subfamily. In terms of assembly, tetramer of two alpha and two beta subunits. Mg(2+) is required as a cofactor.

The protein localises to the cytoplasm. It catalyses the reaction tRNA(Phe) + L-phenylalanine + ATP = L-phenylalanyl-tRNA(Phe) + AMP + diphosphate + H(+). In Streptococcus pneumoniae serotype 2 (strain D39 / NCTC 7466), this protein is Phenylalanine--tRNA ligase alpha subunit.